The chain runs to 350 residues: Probable dTDP-glucose 4,6-dehydratase (350 aa).

7-13 (GGAGFIG) is an NAD(+) binding site. T132 is a binding site for substrate. D133 serves as the catalytic Proton donor. Residues E134 and Y157 each act as proton acceptor in the active site.

Belongs to the NAD(P)-dependent epimerase/dehydratase family. dTDP-glucose dehydratase subfamily. It depends on NAD(+) as a cofactor.

The enzyme catalyses dTDP-alpha-D-glucose = dTDP-4-dehydro-6-deoxy-alpha-D-glucose + H2O. It participates in carbohydrate biosynthesis; dTDP-L-rhamnose biosynthesis. This Sinorhizobium fredii (strain NBRC 101917 / NGR234) protein is Probable dTDP-glucose 4,6-dehydratase.